Consider the following 906-residue polypeptide: Protein translocase subunit SecA (906 aa).

Residues glutamine 86, 104-108, and aspartate 511 contribute to the ATP site; that span reads GEGKT. Basic and acidic residues-rich tracts occupy residues 853–865 and 877–888; these read HESVIDNNQRHDE and VRREGPKVKRND. Residues 853-906 form a disordered region; sequence HESVIDNNQRHDEDEQEETPKVQQVRREGPKVKRNDPCPCGSGKKYKQCHGKVE. Positions 890, 892, 901, and 902 each coordinate Zn(2+). Over residues 896-906 the composition is skewed to basic residues; it reads KKYKQCHGKVE.

The protein belongs to the SecA family. In terms of assembly, monomer and homodimer. Part of the essential Sec protein translocation apparatus which comprises SecA, SecYEG and auxiliary proteins SecDF-YajC and YidC. Requires Zn(2+) as cofactor.

Its subcellular location is the cell inner membrane. The protein localises to the cytoplasm. It carries out the reaction ATP + H2O + cellular proteinSide 1 = ADP + phosphate + cellular proteinSide 2.. Functionally, part of the Sec protein translocase complex. Interacts with the SecYEG preprotein conducting channel. Has a central role in coupling the hydrolysis of ATP to the transfer of proteins into and across the cell membrane, serving both as a receptor for the preprotein-SecB complex and as an ATP-driven molecular motor driving the stepwise translocation of polypeptide chains across the membrane. This chain is Protein translocase subunit SecA, found in Francisella tularensis subsp. novicida (strain U112).